Here is an 800-residue protein sequence, read N- to C-terminus: uncharacterized protein (800 aa).

Residues methionine 1–alanine 21 form the signal peptide. Residues serine 63–isoleucine 72 show a composition bias toward polar residues. 3 disordered regions span residues serine 63–threonine 470, threonine 602–serine 670, and serine 710–serine 776. Low complexity-rich tracts occupy residues threonine 73–serine 314, serine 321–serine 368, serine 375–proline 444, and threonine 451–threonine 470. A compositionally biased stretch (low complexity) spans serine 710–threonine 720. The segment covering glutamate 721–lysine 734 has biased composition (polar residues). The span at threonine 735–serine 776 shows a compositional bias: low complexity.

Its subcellular location is the secreted. It is found in the cell surface. This is an uncharacterized protein from Schizosaccharomyces pombe (strain 972 / ATCC 24843) (Fission yeast).